The following is a 356-amino-acid chain: Chitin elicitor-binding protein (356 aa).

A signal peptide spans 1–28 (MASLTAALATPAAAALLLLVLLAAPASA). Asparagine 30 is a glycosylation site (N-linked (GlcNAc...) asparagine). 4 disulfide bridges follow: cysteine 33/cysteine 100, cysteine 41/cysteine 164, cysteine 98/cysteine 162, and cysteine 100/cysteine 164. 50 to 51 (PN) provides a ligand contact to chitin. N-linked (GlcNAc...) asparagine glycans are attached at residues asparagine 63 and asparagine 89. LysM domains lie at 111 to 158 (PIYV…TLWI) and 175 to 219 (LAYS…ILDV). Chitin contacts are provided by residues 117–123 (PQDGLDA), asparagine 142, 145–152 (PDPNKINV), threonine 155, and glycine 182. Asparagine 151 carries N-linked (GlcNAc...) asparagine glycosylation. N-linked (GlcNAc...) asparagine glycosylation is present at asparagine 184. Residues serine 186 and 211–213 (LQM) each bind chitin. 2 disulfides stabilise this stretch: cysteine 224/cysteine 257 and cysteine 252/cysteine 274. Residues asparagine 265, asparagine 281, asparagine 290, asparagine 306, and asparagine 319 are each glycosylated (N-linked (GlcNAc...) asparagine). Residues 336–356 (RSMWSMSVISFHMVLIIICFL) form a helical membrane-spanning segment.

Forms homooligomer. Interacts with CERK1. Binds to chitin oligosaccharide elicitor. Interacts with LYP4 and LYP6. N-glycosylated. In terms of tissue distribution, expressed in seedlings, roots, shoots, stems and flowers.

Its subcellular location is the cell membrane. Its function is as follows. Chitin elicitor-binding protein involved in the perception and transduction of chitin oligosaccharide elicitor signal for defense responses. In Oryza sativa subsp. japonica (Rice), this protein is Chitin elicitor-binding protein.